The following is a 508-amino-acid chain: Cobalamin biosynthesis protein CobIJ (508 aa).

Residues 1 to 243 are precorrin-2 C20-methyltransferase; sequence MSARGTLWGV…AMLPGGRRRA (243 aa). Positions 244 to 508 are precorrin-3 methylase; the sequence is LLTGTVAVVG…TATKSSRHSD (265 aa). The tract at residues 489-508 is disordered; it reads PRRYPEAGRATATKSSRHSD.

This sequence belongs to the precorrin methyltransferase family.

It catalyses the reaction precorrin-2 + S-adenosyl-L-methionine = precorrin-3A + S-adenosyl-L-homocysteine + H(+). The catalysed reaction is precorrin-3B + S-adenosyl-L-methionine = precorrin-4 + S-adenosyl-L-homocysteine + 3 H(+). Its pathway is cofactor biosynthesis; adenosylcobalamin biosynthesis; cob(II)yrinate a,c-diamide from precorrin-2 (aerobic route): step 1/10. It participates in cofactor biosynthesis; adenosylcobalamin biosynthesis; cob(II)yrinate a,c-diamide from precorrin-2 (aerobic route): step 3/10. Methylates precorrin-2 at the C-20 position to produce precorrin-3A. The polypeptide is Cobalamin biosynthesis protein CobIJ (cobIJ) (Mycobacterium bovis (strain ATCC BAA-935 / AF2122/97)).